Consider the following 481-residue polypeptide: Histidine--tRNA ligase, cytoplasmic (481 aa).

The interval 1–48 (MSEPVVDNVTNKVEKMEVKEKTSAPPKEKKEKKSNKVQLKTPKGTQDY) is disordered. The span at 12 to 31 (KVEKMEVKEKTSAPPKEKKE) shows a compositional bias: basic and acidic residues.

Belongs to the class-II aminoacyl-tRNA synthetase family.

It localises to the cytoplasm. The enzyme catalyses tRNA(His) + L-histidine + ATP = L-histidyl-tRNA(His) + AMP + diphosphate + H(+). This Dictyostelium discoideum (Social amoeba) protein is Histidine--tRNA ligase, cytoplasmic (hisS).